A 197-amino-acid polypeptide reads, in one-letter code: GTP cyclohydrolase-2 (197 aa).

Residue 49 to 53 coordinates GTP; the sequence is RVHSE. Residues cysteine 54, cysteine 65, and cysteine 67 each contribute to the Zn(2+) site. GTP is bound by residues glutamine 70, 92–94, and threonine 114; that span reads EGR. The active-site Proton acceptor is aspartate 126. Arginine 128 acts as the Nucleophile in catalysis. GTP contacts are provided by threonine 149 and lysine 154.

The protein belongs to the GTP cyclohydrolase II family. In terms of assembly, homodimer. The cofactor is Zn(2+).

It carries out the reaction GTP + 4 H2O = 2,5-diamino-6-hydroxy-4-(5-phosphoribosylamino)-pyrimidine + formate + 2 phosphate + 3 H(+). Its pathway is cofactor biosynthesis; riboflavin biosynthesis; 5-amino-6-(D-ribitylamino)uracil from GTP: step 1/4. In terms of biological role, catalyzes the conversion of GTP to 2,5-diamino-6-ribosylamino-4(3H)-pyrimidinone 5'-phosphate (DARP), formate and pyrophosphate. The protein is GTP cyclohydrolase-2 of Pectobacterium atrosepticum (strain SCRI 1043 / ATCC BAA-672) (Erwinia carotovora subsp. atroseptica).